The primary structure comprises 107 residues: Quaternary ammonium compound-resistance protein QacH (107 aa).

4 helical membrane passes run 1–21 (MPYL…AFLK), 26–46 (FSKL…FYFL), 57–77 (ITYA…SVLI), and 84–104 (LISI…NTFG).

It belongs to the drug/metabolite transporter (DMT) superfamily. Small multidrug resistance (SMR) (TC 2.A.7.1) family.

Its subcellular location is the cell membrane. Multidrug exporter. Is implicated for the resistance to bacteriocidal quaternary ammonium compounds. This is Quaternary ammonium compound-resistance protein QacH (qacH) from Staphylococcus saprophyticus.